Here is a 232-residue protein sequence, read N- to C-terminus: Large ribosomal subunit protein uL1 (232 aa).

It belongs to the universal ribosomal protein uL1 family. As to quaternary structure, part of the 50S ribosomal subunit.

Functionally, binds directly to 23S rRNA. The L1 stalk is quite mobile in the ribosome, and is involved in E site tRNA release. Its function is as follows. Protein L1 is also a translational repressor protein, it controls the translation of the L11 operon by binding to its mRNA. This is Large ribosomal subunit protein uL1 from Porphyromonas gingivalis (strain ATCC 33277 / DSM 20709 / CIP 103683 / JCM 12257 / NCTC 11834 / 2561).